The following is a 624-amino-acid chain: Chaperone protein HtpG (624 aa).

An a; substrate-binding region spans residues 1–336; sequence MKGQETRGFQ…SNDLPLNVSR (336 aa). A b region spans residues 337-552; that stretch reads EILQDSTVTR…ADEMSTQMAK (216 aa). Residues 553 to 624 are c; that stretch reads LFAAAGQAVP…IRRMNQLLVS (72 aa).

Belongs to the heat shock protein 90 family. Homodimer.

It is found in the cytoplasm. In terms of biological role, molecular chaperone. Has ATPase activity. The sequence is that of Chaperone protein HtpG from Citrobacter koseri (strain ATCC BAA-895 / CDC 4225-83 / SGSC4696).